A 417-amino-acid polypeptide reads, in one-letter code: Pygopus homolog 1 (417 aa).

Basic and acidic residues predominate over residues 1 to 11 (MSAEQDKEPIA). Disordered stretches follow at residues 1 to 71 (MSAE…AANP), 175 to 265 (HFRQ…MEDP), and 284 to 318 (ENSRSGSAEATNNHANGTQNKPRQPRGAADLCTPD). Residues 18–27 (GDSGLDGLGG) are compositionally biased toward gly residues. The Nuclear localization signal motif lies at 35–41 (PDKKKRK). 3 stretches are compositionally biased toward polar residues: residues 180–221 (SAEN…TNHS), 240–256 (DFTQGATKTPNQNSSTH), and 284–305 (ENSRSGSAEATNNHANGTQNKP). The PHD-type zinc-finger motif lies at 338 to 396 (VYPCGICTNEVNDDQDAILCEASCQKWFHRICTGMTETAYGLLTAEASAVWGCDTCMAD). The tract at residues 339–386 (YPCGICTNEVNDDQDAILCEASCQKWFHRICTGMTETAYGLLTAEASA) is interaction with H3K4me2. The segment at 371-389 (GMTETAYGLLTAEASAVWG) is interaction with BCL9.

Interacts with BCL9 via The PHD-type zinc finger motiv, and thereby becomes part of the nuclear beta-catenin/TCF complex. Found in a complex with BCL9L, CDC73, CTNNB1 and PYGO1. Interacts with histone H3 mono-, di- or tri-methylated at 'Lys4' (H3K4me1, H3K4me2, H3K4me3); the interaction is enhanced by the interaction with BCL9.

The protein resides in the nucleus. Its function is as follows. Involved in signal transduction through the Wnt pathway. This chain is Pygopus homolog 1 (Pygo1), found in Mus musculus (Mouse).